We begin with the raw amino-acid sequence, 228 residues long: Putative N-acetylmannosamine-6-phosphate 2-epimerase (228 aa).

It belongs to the NanE family.

It carries out the reaction an N-acyl-D-glucosamine 6-phosphate = an N-acyl-D-mannosamine 6-phosphate. Its pathway is amino-sugar metabolism; N-acetylneuraminate degradation; D-fructose 6-phosphate from N-acetylneuraminate: step 3/5. Converts N-acetylmannosamine-6-phosphate (ManNAc-6-P) to N-acetylglucosamine-6-phosphate (GlcNAc-6-P). This is Putative N-acetylmannosamine-6-phosphate 2-epimerase from Pasteurella multocida (strain Pm70).